Here is a 270-residue protein sequence, read N- to C-terminus: Protein tonB2 (270 aa).

Topologically, residues 1-51 (MATPQPVDARTQPWRETPGGDLVALGRPVRQALHLVRHNPAQGRVLSRRET) are cytoplasmic. A helical transmembrane segment spans residues 52–69 (ILLVLFALTLHGAVIHWL). Over 70 to 270 (SQQRTPALPE…VSVPIDFKLN (201 aa)) the chain is Periplasmic. The tract at residues 80-187 (VPPQVPPMTI…LTPPSANAGY (108 aa)) is disordered. Residues 94–118 (PAPPVVEPPPPEPLPPVVEEPPPPV) are compositionally biased toward pro residues. Basic residues predominate over residues 133 to 143 (PKPKPKPKPQP). Over residues 144–180 (RPKPAPKAVEPAPPAPPQPAAPPAPPAPAAAPAPLTP) the composition is skewed to pro residues. Residues 180-270 (PPSANAGYLH…VSVPIDFKLN (91 aa)) form the TonB C-terminal domain.

This sequence belongs to the TonB family. Homodimer. Forms a complex with the accessory proteins ExbB and ExbD.

The protein localises to the cell inner membrane. Its function is as follows. Interacts with outer membrane receptor proteins that carry out high-affinity binding and energy dependent uptake into the periplasmic space of specific substrates. It could act to transduce energy from the cytoplasmic membrane to specific energy-requiring processes in the outer membrane, resulting in the release into the periplasm of ligands bound by these outer membrane proteins. This Pseudomonas aeruginosa (strain ATCC 15692 / DSM 22644 / CIP 104116 / JCM 14847 / LMG 12228 / 1C / PRS 101 / PAO1) protein is Protein tonB2 (tonB2).